The chain runs to 82 residues: Small ribosomal subunit protein uS17 (82 aa).

The protein belongs to the universal ribosomal protein uS17 family. In terms of assembly, part of the 30S ribosomal subunit.

Its function is as follows. One of the primary rRNA binding proteins, it binds specifically to the 5'-end of 16S ribosomal RNA. This chain is Small ribosomal subunit protein uS17, found in Shewanella denitrificans (strain OS217 / ATCC BAA-1090 / DSM 15013).